Consider the following 156-residue polypeptide: Peptide deformylase (156 aa).

The Fe cation site is built by Cys90 and His132. The active site involves Glu133. Residue His136 coordinates Fe cation.

This sequence belongs to the polypeptide deformylase family. It depends on Fe(2+) as a cofactor.

It catalyses the reaction N-terminal N-formyl-L-methionyl-[peptide] + H2O = N-terminal L-methionyl-[peptide] + formate. Removes the formyl group from the N-terminal Met of newly synthesized proteins. Requires at least a dipeptide for an efficient rate of reaction. N-terminal L-methionine is a prerequisite for activity but the enzyme has broad specificity at other positions. The chain is Peptide deformylase from Natranaerobius thermophilus (strain ATCC BAA-1301 / DSM 18059 / JW/NM-WN-LF).